Reading from the N-terminus, the 143-residue chain is Small ribosomal subunit protein uS11c (143 aa).

Belongs to the universal ribosomal protein uS11 family. Part of the 30S ribosomal subunit.

The protein resides in the plastid. It is found in the chloroplast. In Brachypodium distachyon (Purple false brome), this protein is Small ribosomal subunit protein uS11c.